The primary structure comprises 769 residues: Transferrin receptor protein 1 (769 aa).

The Cytoplasmic segment spans residues 1-70; sequence MMDQARSAFS…KPKRFNGFIC (70 aa). A mediates interaction with SH3BP4 region spans residues 1-70; that stretch reads MMDQARSAFS…KPKRFNGFIC (70 aa). Phosphoserine occurs at positions 10 and 19. Tyrosine 20 is modified (phosphotyrosine). The Endocytosis signal signature appears at 20–23; sequence YTRF. A Phosphothreonine modification is found at threonine 21. Serine 24 carries the phosphoserine modification. The short motif at 61–64 is the Stop-transfer sequence element; the sequence is KPKR. Cysteine 70 carries the S-palmitoyl cysteine lipid modification. A helical; Signal-anchor for type II membrane protein membrane pass occupies residues 71–91; it reads YGTIAIILFFLIGFMIGYLGY. Topologically, residues 92–769 are extracellular; that stretch reads CKRVEAKSEC…GDIWDIDNEF (678 aa). A glycan (O-linked (GalNAc...) threonine) is linked at threonine 107. Residues 232–322 enclose the PA domain; the sequence is SKAATVTGRL…GTGDPYTPGF (91 aa). N-linked (GlcNAc...) asparagine glycosylation is found at asparagine 260 and asparagine 326. Residues 578 to 769 form a ligand-binding region; that stretch reads TMDVYEKLIQ…GDIWDIDNEF (192 aa). Residues 655-657 carry the Cell attachment site motif; the sequence is RGD. N-linked (GlcNAc...) asparagine glycans are attached at residues asparagine 731 and asparagine 736.

The protein belongs to the peptidase M28 family. M28B subfamily. In terms of assembly, homodimer; disulfide-linked. Binds one transferrin molecule per subunit. Interacts with SH3BP4. Homodimer; disulfide-linked. Binds one transferrin or HFE molecule per subunit. Binds the HLA class II histocompatibility antigen, DR1. Interacts with SH3BP3. Interacts with STEAP3; facilitates TFRC endocytosis in erythroid precursor cells. Post-translationally, stearoylated by ZDHHC6 which inhibits TFRC-mediated activation of the JNK pathway and promotes mitochondrial fragmentation. Stearoylation does not affect iron uptake. N- and O-glycosylated, phosphorylated and palmitoylated.

The protein resides in the cell membrane. The protein localises to the melanosome. Cellular uptake of iron occurs via receptor-mediated endocytosis of ligand-occupied transferrin receptor into specialized endosomes. Endosomal acidification leads to iron release. The apotransferrin-receptor complex is then recycled to the cell surface with a return to neutral pH and the concomitant loss of affinity of apotransferrin for its receptor. Transferrin receptor is necessary for development of erythrocytes and the nervous system. Positively regulates T and B cell proliferation through iron uptake. Acts as a lipid sensor that regulates mitochondrial fusion by regulating activation of the JNK pathway. When dietary levels of stearate (C18:0) are low, promotes activation of the JNK pathway, resulting in HUWE1-mediated ubiquitination and subsequent degradation of the mitofusin MFN2 and inhibition of mitochondrial fusion. When dietary levels of stearate (C18:0) are high, TFRC stearoylation inhibits activation of the JNK pathway and thus degradation of the mitofusin MFN2. Mediates uptake of NICOL1 into fibroblasts where it may regulate extracellular matrix production. This chain is Transferrin receptor protein 1 (TFRC), found in Felis catus (Cat).